Here is a 491-residue protein sequence, read N- to C-terminus: Glutamate--tRNA ligase (491 aa).

Residues 12-22 carry the 'HIGH' region motif; the sequence is PSPTGTPHVGL. The disordered stretch occupies residues 111–134; it reads STPEEVEERHKAAGRDPKLGYDNF. Residues 117-134 show a composition bias toward basic and acidic residues; the sequence is EERHKAAGRDPKLGYDNF. Positions 256–260 match the 'KMSKS' region motif; that stretch reads KLSKR. Lysine 259 is a binding site for ATP.

It belongs to the class-I aminoacyl-tRNA synthetase family. Glutamate--tRNA ligase type 1 subfamily. Monomer.

It is found in the cytoplasm. It carries out the reaction tRNA(Glu) + L-glutamate + ATP = L-glutamyl-tRNA(Glu) + AMP + diphosphate. Catalyzes the attachment of glutamate to tRNA(Glu) in a two-step reaction: glutamate is first activated by ATP to form Glu-AMP and then transferred to the acceptor end of tRNA(Glu). The protein is Glutamate--tRNA ligase of Rhodococcus jostii (strain RHA1).